A 107-amino-acid polypeptide reads, in one-letter code: Nucleoid-associated protein BMEA_A0033 (107 aa).

Belongs to the YbaB/EbfC family. In terms of assembly, homodimer.

Its subcellular location is the cytoplasm. It localises to the nucleoid. Functionally, binds to DNA and alters its conformation. May be involved in regulation of gene expression, nucleoid organization and DNA protection. This chain is Nucleoid-associated protein BMEA_A0033, found in Brucella melitensis biotype 2 (strain ATCC 23457).